The chain runs to 241 residues: Uracil-DNA glycosylase (241 aa).

The active-site Proton acceptor is the Asp71.

It belongs to the uracil-DNA glycosylase (UDG) superfamily. UNG family.

The protein localises to the cytoplasm. It catalyses the reaction Hydrolyzes single-stranded DNA or mismatched double-stranded DNA and polynucleotides, releasing free uracil.. In terms of biological role, excises uracil residues from the DNA which can arise as a result of misincorporation of dUMP residues by DNA polymerase or due to deamination of cytosine. This Xanthomonas campestris pv. campestris (strain 8004) protein is Uracil-DNA glycosylase.